A 674-amino-acid chain; its full sequence is Leucine-rich repeat transmembrane protein FLRT1 (674 aa).

Positions 1–51 (MVVAHSAATATTTPAATVTATVVMTTATMDLRDWLFLCYGLIAFLTEVIDS) are cleaved as a signal peptide. The Extracellular segment spans residues 52–552 (TTCPSVCRCD…QNAGPMAGLP (501 aa)). Cystine bridges form between Cys-54-Cys-60 and Cys-58-Cys-67. One can recognise an LRRNT domain in the interval 54 to 80 (CPSVCRCDNGFIYCNDRGLTSIPSDIP). LRR repeat units follow at residues 81–105 (DDAT…LKTK), 106–126 (VKVQ…INLP), 127–149 (RSLR…SLAR), 151–175 (PLLE…AFAD), 176–197 (SKQL…SGLP), 198–220 (HTLE…AFKG), 222–246 (NSLR…TFSR), 247–269 (LQNL…NLPS), 270–292 (AHLQ…TLAK), and 293–316 (MREL…LFDD). An N-linked (GlcNAc...) asparagine glycan is attached at Asn-305. One can recognise an LRRCT domain in the interval 328-379 (NPWFCGCNLMWLRDWVRARAAVVNVRGLMCQGPEKVRGMAIKDITSEMDECF). Residues Cys-332 and Cys-357 are joined by a disulfide bond. Residues 437–532 (KTLVIQVKPL…VCAKAETADS (96 aa)) form the Fibronectin type-III domain. The chain crosses the membrane as a helical span at residues 553–573 (LAGIIGGAVALVFLFLVLGAI). Over 574–674 (CWYVHRAGEL…GIPDVDYSYT (101 aa)) the chain is Cytoplasmic. Phosphotyrosine is present on residues Tyr-600, Tyr-633, and Tyr-671.

Interacts with FGFR1. Interacts (via extracellular domain) with ADGRL1/LPHN1 and ADGRL3 (via olfactomedin-like domain). In terms of processing, phosphorylated in response to FGFR1 signaling, but is not a direct substrate of FGFR1 or SRC. A mutant where the Tyr phosphorylation sites have been replaced by Phe displays constitutive FGFR1-dependent activation of downstream MAP kinases. Post-translationally, N-glycosylated. Proteolytic cleavage in the juxtamembrane region gives rise to a soluble ectodomain. Detected in brain (at protein level).

Its subcellular location is the cell membrane. It localises to the endoplasmic reticulum membrane. The protein localises to the cytoplasmic vesicle membrane. It is found in the cytoplasm. The protein resides in the perinuclear region. Its subcellular location is the cell junction. It localises to the focal adhesion. The protein localises to the secreted. It is found in the cell projection. The protein resides in the neuron projection. Plays a role in fibroblast growth factor-mediated signaling cascades that lead to the activation of MAP kinases. Promotes neurite outgrowth via FGFR1-mediated activation of downstream MAP kinases. Promotes an increase both in neurite number and in neurite length. May play a role in cell-cell adhesion and cell guidance via its interaction with ADGRL1/LPHN1 and ADGRL3. This chain is Leucine-rich repeat transmembrane protein FLRT1, found in Mus musculus (Mouse).